The primary structure comprises 379 residues: MSTTKRCYYETLEVERNADDSTLKSAFRKLAMKWHPDRNPGDPQCEIKFKEINEAYEVLKDGDKRAAYDRYGHAAFEQGGFGGGAGFGAGFASSFSDIFEDLFGMAAQRGRGTGRERGADLRYNMEITLEDAFKGKTAQIEIPVSVTCEACSGTGAKAGTKPKTCSTCGGAGRVRQAQGFFTLERTCPSCQGRGQTIEDPCPSCTGSGRVTKERTLSVNIPQGVEDGTRIRLAGEGEAGLRGGPPGDLYIFLSLANHAIFQRDGADLHCRVPISMVTAALGGEFEVPTIDRGKTKVKVPSGTQTGRRFRIAGKGMPVLRSRQVGDMYVQVVVETPQNLTKKQQELLAEFEKLSSGETQPEAVGFFSKVKEFFGSRASAP.

The region spanning 7 to 72 (CYYETLEVER…DKRAAYDRYG (66 aa)) is the J domain. A CR-type zinc finger spans residues 135 to 213 (GKTAQIEIPV…CTGSGRVTKE (79 aa)). Zn(2+) contacts are provided by C148, C151, C165, C168, C187, C190, C201, and C204. CXXCXGXG motif repeat units follow at residues 148–155 (CEACSGTG), 165–172 (CSTCGGAG), 187–194 (CPSCQGRG), and 201–208 (CPSCTGSG).

It belongs to the DnaJ family. Homodimer. The cofactor is Zn(2+).

The protein resides in the cytoplasm. In terms of biological role, participates actively in the response to hyperosmotic and heat shock by preventing the aggregation of stress-denatured proteins and by disaggregating proteins, also in an autonomous, DnaK-independent fashion. Unfolded proteins bind initially to DnaJ; upon interaction with the DnaJ-bound protein, DnaK hydrolyzes its bound ATP, resulting in the formation of a stable complex. GrpE releases ADP from DnaK; ATP binding to DnaK triggers the release of the substrate protein, thus completing the reaction cycle. Several rounds of ATP-dependent interactions between DnaJ, DnaK and GrpE are required for fully efficient folding. Also involved, together with DnaK and GrpE, in the DNA replication of plasmids through activation of initiation proteins. This is Chaperone protein DnaJ from Rhodopseudomonas palustris (strain ATCC BAA-98 / CGA009).